Reading from the N-terminus, the 455-residue chain is Chromosomal replication initiator protein DnaA (455 aa).

A domain I, interacts with DnaA modulators region spans residues 1–82 (MNRNTSSLWA…NPDFVVKLVE (82 aa)). Residues 82–117 (EGVKPAPKQNNIVTTKQNAETAVDSEQHLQSVEFKT) form a domain II region. Residues 118 to 335 (GLNSNHLFEN…GALNRVIANA (218 aa)) form a domain III, AAA+ region region. ATP-binding residues include Gly163, Gly165, Lys166, and Thr167. Positions 336–455 (EFTGKTITID…WSNLIRTLSA (120 aa)) are domain IV, binds dsDNA.

The protein belongs to the DnaA family. In terms of assembly, oligomerizes as a right-handed, spiral filament on DNA at oriC.

It localises to the cytoplasm. Its function is as follows. Plays an essential role in the initiation and regulation of chromosomal replication. ATP-DnaA binds to the origin of replication (oriC) to initiate formation of the DNA replication initiation complex once per cell cycle. Binds the DnaA box (a 9 base pair repeat at the origin) and separates the double-stranded (ds)DNA. Forms a right-handed helical filament on oriC DNA; dsDNA binds to the exterior of the filament while single-stranded (ss)DNA is stabiized in the filament's interior. The ATP-DnaA-oriC complex binds and stabilizes one strand of the AT-rich DNA unwinding element (DUE), permitting loading of DNA polymerase. After initiation quickly degrades to an ADP-DnaA complex that is not apt for DNA replication. Binds acidic phospholipids. The sequence is that of Chromosomal replication initiator protein DnaA from Actinobacillus succinogenes (strain ATCC 55618 / DSM 22257 / CCUG 43843 / 130Z).